The chain runs to 546 residues: CTP synthase (546 aa).

Positions 1 to 265 are amidoligase domain; the sequence is MTKYIFVTGG…DDIIAEQLQL (265 aa). A CTP-binding site is contributed by S13. S13 contacts UTP. Residues 14 to 19 and D71 each bind ATP; that span reads SLGKGI. Residues D71 and E139 each contribute to the Mg(2+) site. Residues 146 to 148, 186 to 191, and K222 contribute to the CTP site; these read DIE and KTKPTQ. Residues 186–191 and K222 contribute to the UTP site; that span reads KTKPTQ. Residues 290 to 542 form the Glutamine amidotransferase type-1 domain; that stretch reads KIAMVGKYVD…VKAALAHQAD (253 aa). G351 contacts L-glutamine. C378 (nucleophile; for glutamine hydrolysis) is an active-site residue. L-glutamine contacts are provided by residues 379–382, E402, and R469; that span reads LGMQ. Residues H515 and E517 contribute to the active site.

It belongs to the CTP synthase family. As to quaternary structure, homotetramer.

The enzyme catalyses UTP + L-glutamine + ATP + H2O = CTP + L-glutamate + ADP + phosphate + 2 H(+). The catalysed reaction is L-glutamine + H2O = L-glutamate + NH4(+). It carries out the reaction UTP + NH4(+) + ATP = CTP + ADP + phosphate + 2 H(+). Its pathway is pyrimidine metabolism; CTP biosynthesis via de novo pathway; CTP from UDP: step 2/2. With respect to regulation, allosterically activated by GTP, when glutamine is the substrate; GTP has no effect on the reaction when ammonia is the substrate. The allosteric effector GTP functions by stabilizing the protein conformation that binds the tetrahedral intermediate(s) formed during glutamine hydrolysis. Inhibited by the product CTP, via allosteric rather than competitive inhibition. Its function is as follows. Catalyzes the ATP-dependent amination of UTP to CTP with either L-glutamine or ammonia as the source of nitrogen. Regulates intracellular CTP levels through interactions with the four ribonucleotide triphosphates. The polypeptide is CTP synthase (Chromobacterium violaceum (strain ATCC 12472 / DSM 30191 / JCM 1249 / CCUG 213 / NBRC 12614 / NCIMB 9131 / NCTC 9757 / MK)).